We begin with the raw amino-acid sequence, 636 residues long: Ketocytochalasin monooxygenase (636 aa).

FAD is bound by residues Asp125, Thr133–Trp136, Asp145, Tyr151, and Ile195. An NADP(+)-binding site is contributed by Ala143–Asp145. Residues Thr279 to Gln285, Arg302 to Thr303, and Lys420 to Arg421 contribute to the NADP(+) site. Trp534 serves as a coordination point for FAD.

This sequence belongs to the FAD-binding monooxygenase family. Requires FAD as cofactor.

It carries out the reaction ketocytochalasin + NADPH + O2 + H(+) = iso-precytochalasin + NADP(+) + H2O. The catalysed reaction is iso-precytochalasin + NADPH + O2 + H(+) = cytochalasin Z16 + NADP(+) + H2O. Its pathway is mycotoxin biosynthesis. In terms of biological role, ketocytochalasin monooxygenase; part of the gene cluster that mediates the biosynthesis of a family of the mycotoxins cytochalasins E and K. The hybrid PKS-NRPS synthetase ccsA and the enoyl reductase ccsC are responsible for fusion of phenylalanine with an octaketide backbone and subsequent release of the stable tetramic acid precursor. The polyketide synthase module (PKS) of the PKS-NRPS ccsA is responsible for the synthesis of the octaketide backbone. The downstream nonribosomal peptide synthetase (NRPS) amidates the carboxyl end of the octaketide with a phenylalanine. A reductase-like domain (R) at the C-terminus catalyzes the reductive release of the polyketide-amino acid intermediate. Because ccsA lacks a designated enoylreductase (ER) domain, the required activity is provided the enoyl reductase ccsC. Upon formation of the 11-membered carbocycle-fused perhydroisoindolone intermediate, a number of oxidative steps are required to afford the final cytochalasin E and K, including two hydroxylations at C17 and C18, one alcohol oxidation at C17, one epoxidation at C6 and C7 and two Baeyer-Villiger oxidations. The oxidative modification at C17, C18 and the C6-C7 epoxidation are likely to be catalyzed by the two cytochrome P450 oxygenases ccsD and ccsG. CcsD may be responsible for the epoxidation of the C6-C7 double bond. CcsG may be responsible for the successive oxidative modifications at C17 and C18. The double Baeyer-Villiger oxidations of ketocytochalasin to precytochalasin and cytochalasin Z(16) are among the final steps leading to cytochalasin E and K and are catalyzed by ccsB. The first oxygen insertion step follows that of the classic BVMO mechanism, generating the ester precytochalasin. Release of precytochalasin into an aqueous environment can generate the shunt product iso-precytochalasin through spontaneous isomerization. Alternatively, precytochalasin can undergo further oxidation by ccsB to yield the in-line carbonate-containing cytochalasin Z(16). Cytochalasin Z(16) is a precursor to cytochalasin E and cytochalasin K, whereas iso-precytochalasin is a precursor to cytochalasin Z(17) and rosellichalasin. The hydrolyase ccsE may catalyze hydrolysis of epoxide bond in cytochalasin E to afford cytochalasin K. The function of ccsF has not been assigned but it may play a role in post-PKS-NRPS biosynthetic step, resistance or transport of cytochalasins and related PKS-NRPS products. The chain is Ketocytochalasin monooxygenase from Aspergillus clavatus (strain ATCC 1007 / CBS 513.65 / DSM 816 / NCTC 3887 / NRRL 1 / QM 1276 / 107).